A 538-amino-acid polypeptide reads, in one-letter code: Putative cysteine ligase BshC (538 aa).

Residues 460–484 (KINEQIELLERMLKRNVEKKHEVEL) are a coiled coil.

It belongs to the BshC family.

Its function is as follows. Involved in bacillithiol (BSH) biosynthesis. May catalyze the last step of the pathway, the addition of cysteine to glucosamine malate (GlcN-Mal) to generate BSH. The sequence is that of Putative cysteine ligase BshC from Bacillus cereus (strain AH187).